Consider the following 568-residue polypeptide: Vitamin H transporter 1 (568 aa).

The next 12 helical transmembrane spans lie at 85-105, 123-143, 158-178, 187-207, 222-242, 257-277, 345-365, 384-404, 411-431, 439-459, 470-490, and 508-528; these read IIPCLWILYFLSCCLRFTVSL, GYSAHYLALGLALFYVGYIIF, IWVSRIQLTIGVVGACHAVLG, YVALRFFLGVAESGLWPGLAY, IGWYYTAAQIAAAAVSLVSAG, WMFLIWGVVAIAQALSIPWWL, VWPFILMYFGIVGVGNGIFNY, LLNAPIWLADALGIVTVMPLY, FSFFTGSCLIIIAGLAVANYA, GGLLMIGFGLGPTVPICMAWC, VGVASSLALVTGLGNLGSVVT, and NDVCIALIGVSIIACGIEFLL. The interval 547-568 is disordered; sequence VEDEQEMTDIKPALPSSQQADA.

The protein belongs to the major facilitator superfamily. Allantoate permease family.

The protein resides in the membrane. Involved in uptake of biotin and desthiobiotin with the concomitant entry of protons. This Schizosaccharomyces pombe (strain 972 / ATCC 24843) (Fission yeast) protein is Vitamin H transporter 1 (vht1).